The primary structure comprises 1490 residues: ABC transporter CDR4 (1490 aa).

Residues 1 to 12 are compositionally biased toward polar residues; the sequence is MADADTSSNSSK. Disordered regions lie at residues 1–26 and 53–75; these read MADA…GTYQ and LKRQ…LSGK. Over 1 to 516 the chain is Cytoplasmic; the sequence is MADADTSSNS…NILRIKGNPS (516 aa). Residues 58–67 show a composition bias toward basic and acidic residues; sequence SRQESQKSNE. In terms of domain architecture, ABC transporter 1 spans 151–407; that stretch reads PKYLSLFFRE…FIDMGYECPQ (257 aa). Helical transmembrane passes span 517–537, 551–571, 601–621, 626–646, 659–679, and 767–787; these read IHLF…SIFY, AALF…IFSL, LPTK…MVNF, GNFF…SHIF, AMTP…FVIP, and FGIV…LCEI. Residues 788–1182 are Cytoplasmic-facing; the sequence is NKGAMQKGEI…VFEQNWRTPS (395 aa). The ABC transporter 2 domain occupies 846–1090; it reads FFWRDLTYQV…LINYFEKYGA (245 aa). 882 to 889 lines the ATP pocket; that stretch reads GASGAGKT. Helical transmembrane passes span 1183-1203, 1217-1237, and 1268-1288; these read YLYS…FSFY, FSVF…LPTF, and IPWN…PVGL. Residue Asn-1291 is glycosylated (N-linked (GlcNAc...) asparagine). The next 3 membrane-spanning stretches (helical) occupy residues 1304-1324, 1333-1353, and 1370-1390; these read FMWF…QLCI, AANL…VLVT, and FTYL…VTCA. Asn-1424 is a glycosylation site (N-linked (GlcNAc...) asparagine). A helical membrane pass occupies residues 1455-1475; sequence IGIYIAFIGINIIGTFILYWF.

The protein belongs to the ABC transporter superfamily. ABCG family. PDR (TC 3.A.1.205) subfamily.

The protein localises to the membrane. This is ABC transporter CDR4 (CDR4) from Candida albicans (Yeast).